Reading from the N-terminus, the 278-residue chain is GTPase Era (278 aa).

An Era-type G domain is found at 7 to 168 (YCGYIAIVGK…ENLIYPYLPN (162 aa)). A G1 region spans residues 15–22 (GKPNVGKS). 15-22 (GKPNVGKS) provides a ligand contact to GTP. A G2 region spans residues 41–45 (NTTQK). The interval 62 to 65 (DTPG) is G3. GTP contacts are provided by residues 62–66 (DTPGI) and 117–120 (NKID). Residues 117–120 (NKID) are G4. The G5 stretch occupies residues 147–149 (ISA). A KH type-2 domain is found at 199 to 276 (LRDELPSIIT…YLIIWVKVKI (78 aa)).

It belongs to the TRAFAC class TrmE-Era-EngA-EngB-Septin-like GTPase superfamily. Era GTPase family. Monomer.

The protein resides in the cytoplasm. Its subcellular location is the cell membrane. Functionally, an essential GTPase that binds both GDP and GTP, with rapid nucleotide exchange. Plays a role in 16S rRNA processing and 30S ribosomal subunit biogenesis and possibly also in cell cycle regulation and energy metabolism. The chain is GTPase Era from Buchnera aphidicola subsp. Schizaphis graminum (strain Sg).